A 390-amino-acid chain; its full sequence is Matrix metalloproteinase-23 (390 aa).

The Cytoplasmic segment spans residues 1-19 (MGRGARVPSEAPGAGVERR). The propeptide occupies 1–78 (MGRGARVPSE…PGPLAPRRRR (78 aa)). Residues 20 to 40 (WLGAALVALCLLPALVLLARL) traverse the membrane as a helical; Signal-anchor for type II membrane protein segment. The Lumenal portion of the chain corresponds to 41 to 390 (GAPAVPAWSA…TYSWRVRVRG (350 aa)). 2 N-linked (GlcNAc...) asparagine glycosylation sites follow: Asn-92 and Asn-148. A Zn(2+)-binding site is contributed by His-211. Glu-212 is a catalytic residue. Zn(2+) is bound by residues His-215 and His-221. N-linked (GlcNAc...) asparagine glycosylation occurs at Asn-232. The region spanning 255–289 (CLDRLFVCASWARRGFCDARRRLMKRLCPSSCDFC) is the ShKT domain. 3 disulfides stabilise this stretch: Cys-255–Cys-289, Cys-262–Cys-282, and Cys-271–Cys-286. The Ig-like C2-type domain maps to 295–380 (PTVATTPPPP…VVRRQQRVLT (86 aa)). N-linked (GlcNAc...) asparagine glycosylation is present at Asn-316. A disulfide bridge links Cys-321 with Cys-370.

It belongs to the peptidase M10A family. Zn(2+) serves as cofactor. Post-translationally, N-glycosylated. Proteolytic cleavage might yield an active form. Predominantly expressed in ovary, testis and prostate.

Its subcellular location is the endoplasmic reticulum membrane. It localises to the membrane. With respect to regulation, inhibited by TIMP2. Protease. May regulate the surface expression of some potassium channels by retaining them in the endoplasmic reticulum. The protein is Matrix metalloproteinase-23 (MMP23B) of Homo sapiens (Human).